The chain runs to 101 residues: Large ribosomal subunit protein uL24 (101 aa).

This sequence belongs to the universal ribosomal protein uL24 family. As to quaternary structure, part of the 50S ribosomal subunit.

One of two assembly initiator proteins, it binds directly to the 5'-end of the 23S rRNA, where it nucleates assembly of the 50S subunit. In terms of biological role, one of the proteins that surrounds the polypeptide exit tunnel on the outside of the subunit. In Borrelia turicatae (strain 91E135), this protein is Large ribosomal subunit protein uL24.